Reading from the N-terminus, the 30-residue chain is Bowman-Birk type proteinase inhibitor 3 (30 aa).

2 disulfides stabilise this stretch: C9–C24 and C14–C22.

Inhibits trypsin (IC(50)=4.90 nM) and, to a lesser extent, alpha-chymotrypsin (IC(50)=1.87 uM). This is Bowman-Birk type proteinase inhibitor 3 from Lathyrus sativus (White vetchling).